Consider the following 162-residue polypeptide: UPF0763 protein Sdel_0383 (162 aa).

The protein belongs to the UPF0763 family.

This is UPF0763 protein Sdel_0383 from Sulfurospirillum deleyianum (strain ATCC 51133 / DSM 6946 / 5175).